Here is a 290-residue protein sequence, read N- to C-terminus: 33 kDa chaperonin (290 aa).

Disulfide bonds link Cys-235–Cys-237 and Cys-268–Cys-271.

Belongs to the HSP33 family. Under oxidizing conditions two disulfide bonds are formed involving the reactive cysteines. Under reducing conditions zinc is bound to the reactive cysteines and the protein is inactive.

It localises to the cytoplasm. Its function is as follows. Redox regulated molecular chaperone. Protects both thermally unfolding and oxidatively damaged proteins from irreversible aggregation. Plays an important role in the bacterial defense system toward oxidative stress. The protein is 33 kDa chaperonin of Streptococcus mutans serotype c (strain ATCC 700610 / UA159).